Here is a 291-residue protein sequence, read N- to C-terminus: Probable endonuclease 4 (291 aa).

Zn(2+) contacts are provided by His-72, His-112, Glu-147, Asp-181, His-184, His-215, Asp-228, His-230, and Glu-260.

The protein belongs to the AP endonuclease 2 family. Zn(2+) is required as a cofactor.

The catalysed reaction is Endonucleolytic cleavage to 5'-phosphooligonucleotide end-products.. Functionally, endonuclease IV plays a role in DNA repair. It cleaves phosphodiester bonds at apurinic or apyrimidinic (AP) sites, generating a 3'-hydroxyl group and a 5'-terminal sugar phosphate. The protein is Probable endonuclease 4 of Mycoplasma genitalium (strain ATCC 33530 / DSM 19775 / NCTC 10195 / G37) (Mycoplasmoides genitalium).